A 90-amino-acid chain; its full sequence is Large ribosomal subunit protein bL27 (90 aa).

The interval 1 to 21 (MASKKAGGSTRNGRDSEAKRL) is disordered.

Belongs to the bacterial ribosomal protein bL27 family.

This Neisseria gonorrhoeae (strain ATCC 700825 / FA 1090) protein is Large ribosomal subunit protein bL27.